The chain runs to 381 residues: Phthiodiolone/phenolphthiodiolone dimycocerosates ketoreductase (381 aa).

The protein belongs to the mer family. Phthiodiolone/phenolphthiodiolone dimycocerosates ketoreductase subfamily.

Catalyzes the reduction of the keto moiety of phthiodiolone dimycocerosates (DIM B) and glycosylated phenolphthiodiolone dimycocerosates to form the intermediate compounds phthiotriol and glycosylated phenolphthiotriol dimycocerosates during phthiocerol dimycocerosates (DIM A) and glycosylated phenolphthiocerol dimycocerosates (PGL) biosynthesis. This is Phthiodiolone/phenolphthiodiolone dimycocerosates ketoreductase from Mycobacterium tuberculosis (strain CDC 1551 / Oshkosh).